A 79-amino-acid chain; its full sequence is Small ribosomal subunit protein bS18 (79 aa).

Belongs to the bacterial ribosomal protein bS18 family. In terms of assembly, part of the 30S ribosomal subunit. Forms a tight heterodimer with protein bS6.

Functionally, binds as a heterodimer with protein bS6 to the central domain of the 16S rRNA, where it helps stabilize the platform of the 30S subunit. The chain is Small ribosomal subunit protein bS18 from Ureaplasma parvum serovar 3 (strain ATCC 27815 / 27 / NCTC 11736).